A 32-amino-acid chain; its full sequence is Calichemicin antitumor antibiotic biosynthesis protein (32 aa).

This Micromonospora echinospora (Micromonospora purpurea) protein is Calichemicin antitumor antibiotic biosynthesis protein.